Consider the following 520-residue polypeptide: GMP synthase [glutamine-hydrolyzing] (520 aa).

A Glutamine amidotransferase type-1 domain is found at 12-205; sequence KIIVLDYGSQ…AVNICGARGD (194 aa). Cysteine 89 (nucleophile) is an active-site residue. Catalysis depends on residues histidine 179 and glutamate 181. Residues 206-395 form the GMPS ATP-PPase domain; it reads WSMDNFIDME…LGMPDEVVWR (190 aa). An ATP-binding site is contributed by 233–239; that stretch reads SGGVDSS.

Homodimer.

The catalysed reaction is XMP + L-glutamine + ATP + H2O = GMP + L-glutamate + AMP + diphosphate + 2 H(+). It participates in purine metabolism; GMP biosynthesis; GMP from XMP (L-Gln route): step 1/1. In terms of biological role, catalyzes the synthesis of GMP from XMP. The chain is GMP synthase [glutamine-hydrolyzing] from Streptococcus agalactiae serotype III (strain NEM316).